Here is a 377-residue protein sequence, read N- to C-terminus: MRKLFTSESVSEGHPDKICDQISDAILDEVLKQDPNAKVACETFATTNYLLIGGQITTTASVDYEKIARDVLRKIGYNNDAYGINADTCKIDIRVEQQSADIALGIDLDTEVIGAGDQGIMFGYATNESKTFLPLAITISHELVYLASKLRKEGKFKWARPDMKSQVTIDYTDESNPKIDTILMSIQHDDEMIEEEFKKFIKSEIMDVVAKEFELNTDFNVLINPTGRFVIGGPQGDTGLTGRKIIVDTYGGYSRHGGGAFSGKDATKVDRSAAYMARYAAKNLVASGLADKIEIQVSYAIGKPEPVSIFIETFGTEKVSKEVIAKALNENFDFSVNEIIKKLDLRKPTFLKTATYGHFGKDEFTWEQLDKVKTIKK.

His-14 lines the ATP pocket. Mg(2+) is bound at residue Asp-16. Glu-42 provides a ligand contact to K(+). Residue Gln-98 participates in L-methionine binding. Residues 98 to 108 (QSADIALGIDL) form a flexible loop region. ATP is bound by residues 162–164 (DMK), 228–229 (RF), Asp-237, 243–244 (RK), Ala-260, and Lys-264. Residue Asp-237 participates in L-methionine binding. Lys-268 contributes to the L-methionine binding site.

Belongs to the AdoMet synthase family. Homotetramer; dimer of dimers. It depends on Mg(2+) as a cofactor. Requires K(+) as cofactor.

It localises to the cytoplasm. It catalyses the reaction L-methionine + ATP + H2O = S-adenosyl-L-methionine + phosphate + diphosphate. It participates in amino-acid biosynthesis; S-adenosyl-L-methionine biosynthesis; S-adenosyl-L-methionine from L-methionine: step 1/1. Catalyzes the formation of S-adenosylmethionine (AdoMet) from methionine and ATP. The overall synthetic reaction is composed of two sequential steps, AdoMet formation and the subsequent tripolyphosphate hydrolysis which occurs prior to release of AdoMet from the enzyme. The polypeptide is S-adenosylmethionine synthase (Mesoplasma florum (strain ATCC 33453 / NBRC 100688 / NCTC 11704 / L1) (Acholeplasma florum)).